The chain runs to 218 residues: Dehydration-responsive element-binding protein 1B (218 aa).

Residues M1 to R26 are disordered. The AP2/ERF DNA-binding region spans V32–A95. The interval S131–N151 is disordered.

The protein belongs to the AP2/ERF transcription factor family. ERF subfamily.

Its subcellular location is the nucleus. Transcriptional activator that binds specifically to the DNA sequence 5'-[AG]CCGAC-3'. Binding to the C-repeat/DRE element mediates high salinity- and dehydration-inducible transcription. Confers resistance to high salt, cold and drought stress. The sequence is that of Dehydration-responsive element-binding protein 1B (DREB1B) from Oryza sativa subsp. japonica (Rice).